The following is an 81-amino-acid chain: Photosystem I iron-sulfur center (81 aa).

4Fe-4S ferredoxin-type domains lie at S2–W31 and I39–Y68. 8 residues coordinate [4Fe-4S] cluster: C11, C14, C17, C21, C48, C51, C54, and C58.

The eukaryotic PSI reaction center is composed of at least 11 subunits. [4Fe-4S] cluster is required as a cofactor.

The protein resides in the plastid. It is found in the chloroplast thylakoid membrane. The catalysed reaction is reduced [plastocyanin] + hnu + oxidized [2Fe-2S]-[ferredoxin] = oxidized [plastocyanin] + reduced [2Fe-2S]-[ferredoxin]. Functionally, apoprotein for the two 4Fe-4S centers FA and FB of photosystem I (PSI); essential for photochemical activity. FB is the terminal electron acceptor of PSI, donating electrons to ferredoxin. The C-terminus interacts with PsaA/B/D and helps assemble the protein into the PSI complex. Required for binding of PsaD and PsaE to PSI. PSI is a plastocyanin-ferredoxin oxidoreductase, converting photonic excitation into a charge separation, which transfers an electron from the donor P700 chlorophyll pair to the spectroscopically characterized acceptors A0, A1, FX, FA and FB in turn. The chain is Photosystem I iron-sulfur center from Acorus calamus (Sweet flag).